The primary structure comprises 502 residues: ATP synthase subunit alpha (502 aa).

Position 169–176 (169–176) interacts with ATP; that stretch reads GDRQTGKT.

Belongs to the ATPase alpha/beta chains family. F-type ATPases have 2 components, CF(1) - the catalytic core - and CF(0) - the membrane proton channel. CF(1) has five subunits: alpha(3), beta(3), gamma(1), delta(1), epsilon(1). CF(0) has three main subunits: a(1), b(2) and c(9-12). The alpha and beta chains form an alternating ring which encloses part of the gamma chain. CF(1) is attached to CF(0) by a central stalk formed by the gamma and epsilon chains, while a peripheral stalk is formed by the delta and b chains.

The protein resides in the cell inner membrane. The enzyme catalyses ATP + H2O + 4 H(+)(in) = ADP + phosphate + 5 H(+)(out). Its function is as follows. Produces ATP from ADP in the presence of a proton gradient across the membrane. The alpha chain is a regulatory subunit. This is ATP synthase subunit alpha from Geotalea daltonii (strain DSM 22248 / JCM 15807 / FRC-32) (Geobacter daltonii).